Consider the following 627-residue polypeptide: Capsid vertex component 2 (627 aa).

The interaction with major capsid protein/MCP stretch occupies residues 1–56 (MFGRGLPPLKFGQIGGDGWSTVLADPGNRLIVANAHRSEPRLRVETLIREELLTSR). The tract at residues 458 to 480 (LSGDGDPIRAPGSRPPAAAEATL) is disordered.

The protein belongs to the herpesviridae CVC2 protein family. Heterodimerizes with CVC1. Interacts with major capsid protein/MCP and triplex capsid protein 1/TRX1 at the pentamer vertices. Interacts with the large tegument protein/LTP.

The protein localises to the virion. It is found in the host nucleus. In terms of biological role, capsid vertex-specific component that plays a role during viral DNA encapsidation, assuring correct genome cleavage and presumably stabilizing capsids that contain full-length viral genomes. Participates in the interaction between the capsid and the tegument through interaction with the large tegument protein/LTP. This Psittacid herpesvirus 1 (isolate Amazon parrot/-/97-0001/1997) (PsHV-1) protein is Capsid vertex component 2.